A 308-amino-acid polypeptide reads, in one-letter code: UDP-N-acetylenolpyruvoylglucosamine reductase (308 aa).

One can recognise an FAD-binding PCMH-type domain in the interval 32–196; sequence VGGPAARLYK…ISAKLQLSPG (165 aa). Arg176 is a catalytic residue. Ser225 serves as the catalytic Proton donor. Glu296 is an active-site residue.

The protein belongs to the MurB family. Requires FAD as cofactor.

The protein resides in the cytoplasm. The catalysed reaction is UDP-N-acetyl-alpha-D-muramate + NADP(+) = UDP-N-acetyl-3-O-(1-carboxyvinyl)-alpha-D-glucosamine + NADPH + H(+). The protein operates within cell wall biogenesis; peptidoglycan biosynthesis. Functionally, cell wall formation. This chain is UDP-N-acetylenolpyruvoylglucosamine reductase, found in Legionella pneumophila subsp. pneumophila (strain Philadelphia 1 / ATCC 33152 / DSM 7513).